A 262-amino-acid polypeptide reads, in one-letter code: TLC domain-containing protein 4-B (262 aa).

6 helical membrane-spanning segments follow: residues 6-26 (PLTV…FHVG), 53-73 (TVSS…LVYD), 90-110 (LNVA…IYYW), 122-142 (HLAA…PYFG), 177-197 (GVLM…IYYG), and 218-238 (AWII…IKIA). The 203-residue stretch at 44–246 (RQKIEWNSRT…IAKGCYKVLY (203 aa)) folds into the TLC domain.

The protein belongs to the TLCD4 family.

It is found in the membrane. In Xenopus laevis (African clawed frog), this protein is TLC domain-containing protein 4-B (tlcd4-b).